The chain runs to 331 residues: N-acetyl-alpha-D-glucosaminyl-diphospho-ditrans,octacis-undecaprenol 4-epimerase (331 aa).

Residues 13–14 (FV), 34–39 (QQSHFY), 47–48 (DV), Ser-109, Tyr-132, and Lys-136 contribute to the NAD(+) site. Substrate contacts are provided by Ser-109 and Tyr-132. The active-site Proton acceptor is Tyr-132. Substrate is bound by residues 183 to 184 (GK) and 199 to 201 (YVG).

This sequence belongs to the NAD(P)-dependent epimerase/dehydratase family. It depends on NAD(+) as a cofactor.

Its subcellular location is the cell membrane. The catalysed reaction is N-acetyl-alpha-D-glucosaminyl-di-trans,octa-cis-undecaprenyl diphosphate = N-acetyl-alpha-D-galactosaminyl-di-trans,octa-cis-undecaprenyl diphosphate. The protein operates within bacterial outer membrane biogenesis; LPS O-antigen biosynthesis. Its function is as follows. Involved in biosynthesis of the repeating tetrasaccharide unit of the O-antigen. Catalyzes the reversible epimerization of the hydroxyl group at position C4 of undecaprenyl pyrophosphate-N-acetylglucosamine (UndPP-GlcNAc) to yield undecaprenyl pyrophosphate-N-acetylgalactosamine (UndPP-GalNAc). The protein is N-acetyl-alpha-D-glucosaminyl-diphospho-ditrans,octacis-undecaprenol 4-epimerase of Escherichia coli O157:H7.